Here is a 327-residue protein sequence, read N- to C-terminus: Tetraacyldisaccharide 4'-kinase (327 aa).

Residue Thr-58–Thr-65 coordinates ATP.

The protein belongs to the LpxK family.

The catalysed reaction is a lipid A disaccharide + ATP = a lipid IVA + ADP + H(+). It functions in the pathway glycolipid biosynthesis; lipid IV(A) biosynthesis; lipid IV(A) from (3R)-3-hydroxytetradecanoyl-[acyl-carrier-protein] and UDP-N-acetyl-alpha-D-glucosamine: step 6/6. Its function is as follows. Transfers the gamma-phosphate of ATP to the 4'-position of a tetraacyldisaccharide 1-phosphate intermediate (termed DS-1-P) to form tetraacyldisaccharide 1,4'-bis-phosphate (lipid IVA). This chain is Tetraacyldisaccharide 4'-kinase, found in Alcanivorax borkumensis (strain ATCC 700651 / DSM 11573 / NCIMB 13689 / SK2).